Reading from the N-terminus, the 287-residue chain is Glutamate racemase (287 aa).

Residues 32–33 (DS) and 64–65 (YG) contribute to the substrate site. Cysteine 96 functions as the Proton donor/acceptor in the catalytic mechanism. Residue 97 to 98 (NT) coordinates substrate. Cysteine 208 acts as the Proton donor/acceptor in catalysis. 209–210 (TH) is a binding site for substrate.

This sequence belongs to the aspartate/glutamate racemases family.

It carries out the reaction L-glutamate = D-glutamate. It participates in cell wall biogenesis; peptidoglycan biosynthesis. Its function is as follows. Provides the (R)-glutamate required for cell wall biosynthesis. This Serratia proteamaculans (strain 568) protein is Glutamate racemase.